The following is a 220-amino-acid chain: Adenylate kinase (220 aa).

10–15 (GAGKGT) is an ATP binding site. The NMP stretch occupies residues 30 to 59 (STGDMLRAAVKAGTPLGVEAKGYMDAGKLV). AMP contacts are provided by residues Thr-31, Arg-36, 57-59 (KLV), 85-88 (GFPR), and Gln-92. The LID stretch occupies residues 122–159 (GRRTHPASGRTYHVKFNPPKVEGHDDVTGEPLIQRDDD). Residues Arg-123 and 132–133 (TY) each bind ATP. AMP-binding residues include Arg-156 and Arg-167. Residue Gly-206 coordinates ATP.

This sequence belongs to the adenylate kinase family. As to quaternary structure, monomer.

The protein resides in the cytoplasm. The catalysed reaction is AMP + ATP = 2 ADP. Its pathway is purine metabolism; AMP biosynthesis via salvage pathway; AMP from ADP: step 1/1. Catalyzes the reversible transfer of the terminal phosphate group between ATP and AMP. Plays an important role in cellular energy homeostasis and in adenine nucleotide metabolism. This chain is Adenylate kinase, found in Burkholderia lata (strain ATCC 17760 / DSM 23089 / LMG 22485 / NCIMB 9086 / R18194 / 383).